We begin with the raw amino-acid sequence, 445 residues long: Membrane protein insertase YidC (445 aa).

A run of 5 helical transmembrane segments spans residues 6 to 26 (VVAI…PIKV), 248 to 268 (FGWA…PLYH), 313 to 333 (ASGC…WSVI), 352 to 372 (LSAG…VASY), and 388 to 408 (GIIM…GLFL).

This sequence belongs to the OXA1/ALB3/YidC family. Type 1 subfamily. In terms of assembly, interacts with the Sec translocase complex via SecD. Specifically interacts with transmembrane segments of nascent integral membrane proteins during membrane integration.

The protein localises to the cell inner membrane. In terms of biological role, required for the insertion and/or proper folding and/or complex formation of integral membrane proteins into the membrane. Involved in integration of membrane proteins that insert both dependently and independently of the Sec translocase complex, as well as at least some lipoproteins. Aids folding of multispanning membrane proteins. This Thermotoga maritima (strain ATCC 43589 / DSM 3109 / JCM 10099 / NBRC 100826 / MSB8) protein is Membrane protein insertase YidC.